The chain runs to 132 residues: Small ribosomal subunit protein uS8 (132 aa).

The protein belongs to the universal ribosomal protein uS8 family. Part of the 30S ribosomal subunit. Contacts proteins S5 and S12.

In terms of biological role, one of the primary rRNA binding proteins, it binds directly to 16S rRNA central domain where it helps coordinate assembly of the platform of the 30S subunit. The polypeptide is Small ribosomal subunit protein uS8 (Parvibaculum lavamentivorans (strain DS-1 / DSM 13023 / NCIMB 13966)).